The following is a 605-amino-acid chain: Elongation factor 4 (605 aa).

Residues 9 to 192 form the tr-type G domain; that stretch reads GMIRNFCIIA…AIVARVPAPA (184 aa). GTP is bound by residues 21–26 and 139–142; these read DHGKST and NKID.

The protein belongs to the TRAFAC class translation factor GTPase superfamily. Classic translation factor GTPase family. LepA subfamily.

The protein resides in the cell inner membrane. It catalyses the reaction GTP + H2O = GDP + phosphate + H(+). Its function is as follows. Required for accurate and efficient protein synthesis under certain stress conditions. May act as a fidelity factor of the translation reaction, by catalyzing a one-codon backward translocation of tRNAs on improperly translocated ribosomes. Back-translocation proceeds from a post-translocation (POST) complex to a pre-translocation (PRE) complex, thus giving elongation factor G a second chance to translocate the tRNAs correctly. Binds to ribosomes in a GTP-dependent manner. In Chlorobaculum tepidum (strain ATCC 49652 / DSM 12025 / NBRC 103806 / TLS) (Chlorobium tepidum), this protein is Elongation factor 4.